The primary structure comprises 212 residues: Ion-translocating oxidoreductase complex subunit G (212 aa).

Residues 9 to 29 form a helical membrane-spanning segment; it reads ASLLGLFALLCTALVALVNQF. T176 is modified (FMN phosphoryl threonine).

The protein belongs to the RnfG family. As to quaternary structure, the complex is composed of six subunits: RnfA, RnfB, RnfC, RnfD, RnfE and RnfG. Requires FMN as cofactor.

It localises to the cell inner membrane. Functionally, part of a membrane-bound complex that couples electron transfer with translocation of ions across the membrane. This is Ion-translocating oxidoreductase complex subunit G from Shewanella loihica (strain ATCC BAA-1088 / PV-4).